The sequence spans 479 residues: Chromosomal replication initiator protein DnaA (479 aa).

The segment at 1–74 is domain I, interacts with DnaA modulators; that stretch reads MFSGVVMAWQ…RSLTGVDSSI (74 aa). Residues 74–142 form a domain II region; the sequence is ITDVRFLEKK…SVPKNNASIR (69 aa). Positions 143–360 are domain III, AAA+ region; it reads ALHPRYTFDE…SAITAIGARA (218 aa). Glycine 187, glycine 189, lysine 190, and serine 191 together coordinate ATP. The tract at residues 361–479 is domain IV, binds dsDNA; the sequence is RLMGGYIDMN…NLLSDKVKQI (119 aa).

It belongs to the DnaA family. Oligomerizes as a right-handed, spiral filament on DNA at oriC.

The protein resides in the cytoplasm. Functionally, plays an essential role in the initiation and regulation of chromosomal replication. ATP-DnaA binds to the origin of replication (oriC) to initiate formation of the DNA replication initiation complex once per cell cycle. Binds the DnaA box (a 9 base pair repeat at the origin) and separates the double-stranded (ds)DNA. Forms a right-handed helical filament on oriC DNA; dsDNA binds to the exterior of the filament while single-stranded (ss)DNA is stabiized in the filament's interior. The ATP-DnaA-oriC complex binds and stabilizes one strand of the AT-rich DNA unwinding element (DUE), permitting loading of DNA polymerase. After initiation quickly degrades to an ADP-DnaA complex that is not apt for DNA replication. Binds acidic phospholipids. The polypeptide is Chromosomal replication initiator protein DnaA (Desulfotalea psychrophila (strain LSv54 / DSM 12343)).